We begin with the raw amino-acid sequence, 145 residues long: Chaperonin GroEL (145 aa).

Belongs to the chaperonin (HSP60) family. Forms a cylinder of 14 subunits composed of two heptameric rings stacked back-to-back. Interacts with the co-chaperonin GroES.

The protein localises to the cytoplasm. It catalyses the reaction ATP + H2O + a folded polypeptide = ADP + phosphate + an unfolded polypeptide.. Its function is as follows. Together with its co-chaperonin GroES, plays an essential role in assisting protein folding. The GroEL-GroES system forms a nano-cage that allows encapsulation of the non-native substrate proteins and provides a physical environment optimized to promote and accelerate protein folding. In Thermus thermophilus, this protein is Chaperonin GroEL.